The sequence spans 452 residues: Phosphoglucosamine mutase (452 aa).

Ser-104 (phosphoserine intermediate) is an active-site residue. Residues Ser-104, Asp-245, Asp-247, and Asp-249 each coordinate Mg(2+). Ser-104 carries the phosphoserine modification.

It belongs to the phosphohexose mutase family. Requires Mg(2+) as cofactor. Activated by phosphorylation.

It carries out the reaction alpha-D-glucosamine 1-phosphate = D-glucosamine 6-phosphate. In terms of biological role, catalyzes the conversion of glucosamine-6-phosphate to glucosamine-1-phosphate. The protein is Phosphoglucosamine mutase of Gluconacetobacter diazotrophicus (strain ATCC 49037 / DSM 5601 / CCUG 37298 / CIP 103539 / LMG 7603 / PAl5).